Consider the following 526-residue polypeptide: Neutrophil cytosol factor 2 (526 aa).

TPR repeat units lie at residues 37–70 (SRIC…DKHL), 71–104 (AVAY…LRGN), and 121–154 (CEVL…KSEP). Thr233 bears the Phosphothreonine mark. In terms of domain architecture, SH3 1 spans 240–299 (LEGEAHRVLFGFVPETKEELQVMPGNIVFVLKKGNDNWATVMFNGQKGLVPCNYLEPVEL). Residues 303 to 315 (PQQQPQEESSPQS) show a composition bias toward low complexity. Positions 303–346 (PQQQPQEESSPQSDIPAPPSSKAPGRPQLSPGQKQKEEPKEVKL) are disordered. The segment covering 336 to 345 (KQKEEPKEVK) has biased composition (basic and acidic residues). The 79-residue stretch at 351 to 429 (PYTLKVHYKY…YCLTLWCENT (79 aa)) folds into the PB1 domain. At Ser399 the chain carries Phosphoserine. The interval 433–458 (QGFPDEPKESEKADANNQTTEPQLKK) is disordered. Residues 437-446 (DEPKESEKAD) show a composition bias toward basic and acidic residues. An SH3 2 domain is found at 457-516 (KKGSQVEALFSYEATQPEDLEFQEGDIILVLSKVNEEWLEGECKGKVGIFPKVFVEDCAT).

Belongs to the NCF2/NOXA1 family. In terms of assembly, component of the phagocyte NADPH oxidase complex composed of an obligatory core heterodimer formed by the membrane proteins CYBA and CYBB and the cytosolic regulatory subunits NCF1/p47-phox, NCF2/p67-phox, NCF4/p40-phox and the small GTPase RAC1 or RAC2. Part of a cytosolic complex composed at least by NCF1, NCF2 and NCF4. Interacts with NCF4. Interacts (via the C-terminal SH3 domain) with NCF1 (via C-terminus). Interacts with SYTL1 and RAC1. May interact with NOXO1. Interacts with S100A8 and calprotectin (S100A8/9). Interacts with GBP7 (via GB1/RHD3-type G domain). Interacts with CYBB; the interaction is enhanced in the presence of GBP7.

It localises to the cytoplasm. Functionally, subunit of the phagocyte NADPH oxidase complex that mediates the transfer of electrons from cytosolic NADPH to O2 to produce the superoxide anion (O2(-)). In the activated complex, electrons are first transferred from NADPH to flavin adenine dinucleotide (FAD) and subsequently transferred via two heme molecules to molecular oxygen, producing superoxide through an outer-sphere reaction. Activation of the NADPH oxidase complex is initiated by the assembly of cytosolic subunits of the NADPH oxidase complex with the core NADPH oxidase complex to form a complex at the plasma membrane or phagosomal membrane. This activation process is initiated by phosphorylation dependent binding of the cytosolic NCF1/p47-phox subunit to the C-terminus of CYBA/p22-phox. The sequence is that of Neutrophil cytosol factor 2 from Homo sapiens (Human).